Consider the following 101-residue polypeptide: Apolipoprotein C-II (101 aa).

Positions 1–22 (MGTRYFLVGFLILLVLGFEAQG) are cleaved as a signal peptide. Residues 66-74 (TVDEKIRDI) are lipid binding. The lipoprotein lipase cofactor stretch occupies residues 78–101 (STAAVTTYAGIITDQVFSILSGED).

The protein belongs to the apolipoprotein C2 family. Post-translationally, proapolipoprotein C-II is synthesized as a sialic acid containing glycoprotein which is subsequently desialylated prior to its proteolytic processing. In terms of processing, proapolipoprotein C-II, the major form found in plasma undergoes proteolytic cleavage of its N-terminal hexapeptide to generate apolipoprotein C-II, which occurs as the minor form in plasma.

Its subcellular location is the secreted. Functionally, component of chylomicrons, very low-density lipoproteins (VLDL), low-density lipoproteins (LDL), and high-density lipoproteins (HDL) in plasma. Plays an important role in lipoprotein metabolism as an activator of lipoprotein lipase. Both proapolipoprotein C-II and apolipoprotein C-II can activate lipoprotein lipase. The sequence is that of Apolipoprotein C-II (APOC2) from Capra hircus aegagrus (Wild goat).